The primary structure comprises 293 residues: Xylanase inhibitor protein XIP (293 aa).

Residues 1-21 form the signal peptide; it reads MALRRLAALLSLAVLLSAGLA. A GH18 domain is found at 31 to 293; it reads GDTVIIWGRN…DKKTGFTAHL (263 aa). 2 cysteine pairs are disulfide-bonded: cysteine 50/cysteine 92 and cysteine 189/cysteine 218.

It belongs to the glycosyl hydrolase 18 family. Xylanase inhibitor subfamily. Expressed in mature grain.

The protein resides in the secreted. Fungal xylanase inhibitor. Possesses competitive inhibiting activity against several fungal endo-1,4-beta-D-xylanases belonging to glycoside hydrolase family 10 (GH10) and family 11 (GH11). May function in plant defense against secreted fungal pathogen xylanases. Is similar to class III chitinases, but does not exhibit chitinase activity. The protein is Xylanase inhibitor protein XIP of Oryza sativa subsp. japonica (Rice).